The following is a 270-amino-acid chain: MATGTRYAGKVVVVTGGGRGIGAGIVRAFVNSGARVVICDKDESGGRALEQELPGAVFILCDVTQEDDVKTLVSETIRRFGRLDCVVNNAGHHPPPQRPEETSAQGFRQLLELNLLGTYTLTKLALPYLRKSQGNVINISSLVGAIGQAQAVPYVATKGAVTAMTKALALDESPYGVRVNCISPGNIWTPLWEELAALMPDPRATIREGMLAQPLGRMGQPAEVGAAAVFLASEANFCTGIELLVTGGAELGYGCKASRSTPVDAPDIPS.

Residues Arg-19, Ile-21, Asp-40, Lys-41, Asp-62, Val-63, Asn-89, Tyr-154, Lys-158, Ile-187, Thr-189, and Leu-191 each coordinate NAD(+). The active-site Proton acceptor is the Tyr-154.

Belongs to the short-chain dehydrogenases/reductases (SDR) family. In terms of assembly, homotetramer. Highly expressed in brain, placenta, liver and kidney.

Its subcellular location is the cytoplasm. It carries out the reaction L-fucose + NAD(+) = L-fucono-1,5-lactone + NADH + H(+). It catalyses the reaction D-arabinose + NAD(+) = D-arabinono-1,5-lactone + NADH + H(+). The enzyme catalyses L-galactose + NAD(+) = L-galactono-1,5-lactone + NADH + H(+). It functions in the pathway carbohydrate degradation; L-fucose degradation. Functionally, catalyzes the NAD(+)-dependent oxidation of L-fucose, yielding L-fucono-1,5-lactone, which rapidly converts spontaneously to L-fucone-1,4-lactone. Can also act on D-arabinose and L-galactose, with lower catalytic efficiency. Does not use NADPH. May be the initial enzyme of the L-fucose degradation pathway in mammals. This chain is L-fucose dehydrogenase, found in Homo sapiens (Human).